A 289-amino-acid chain; its full sequence is Protoheme IX farnesyltransferase (289 aa).

The next 9 membrane-spanning stretches (helical) occupy residues 9–29 (VALMKLRVVELLLITTVPVMM), 40–60 (LIAVTLVAGTLAAGSANTINC), 89–109 (LTFGIVIGIVSTLLFGFLVNW), 110–130 (PSALLADGAIAFYVFVYTLGL), 134–154 (TPSNIVIGGAAGCFPVLIGWS), 155–175 (AVTGTVGWAAVLLFAVVFFWT), 190–209 (YAAAGVPMLPVVASVQVVTR), 228–248 (VASTGPVYLVAAVAVGAWFLV), and 269–289 (FHMSITYLTLLFVAIAVTALV).

This sequence belongs to the UbiA prenyltransferase family. Protoheme IX farnesyltransferase subfamily.

Its subcellular location is the cell membrane. It catalyses the reaction heme b + (2E,6E)-farnesyl diphosphate + H2O = Fe(II)-heme o + diphosphate. It functions in the pathway porphyrin-containing compound metabolism; heme O biosynthesis; heme O from protoheme: step 1/1. Converts heme B (protoheme IX) to heme O by substitution of the vinyl group on carbon 2 of heme B porphyrin ring with a hydroxyethyl farnesyl side group. The protein is Protoheme IX farnesyltransferase of Frankia casuarinae (strain DSM 45818 / CECT 9043 / HFP020203 / CcI3).